Reading from the N-terminus, the 295-residue chain is Acetyl-coenzyme A carboxylase carboxyl transferase subunit beta (295 aa).

Residues 1–20 (MSWLSKLMPSGIRTENTPAK) form a disordered region. A CoA carboxyltransferase N-terminal domain is found at 28–295 (LWEKCSNCGS…QPHPQDADAA (268 aa)). Residues Cys32, Cys35, Cys51, and Cys54 each contribute to the Zn(2+) site. A C4-type zinc finger spans residues 32–54 (CSNCGSALYGPELEENLEVCPKC).

The protein belongs to the AccD/PCCB family. In terms of assembly, acetyl-CoA carboxylase is a heterohexamer composed of biotin carboxyl carrier protein (AccB), biotin carboxylase (AccC) and two subunits each of ACCase subunit alpha (AccA) and ACCase subunit beta (AccD). The cofactor is Zn(2+).

It is found in the cytoplasm. It carries out the reaction N(6)-carboxybiotinyl-L-lysyl-[protein] + acetyl-CoA = N(6)-biotinyl-L-lysyl-[protein] + malonyl-CoA. It functions in the pathway lipid metabolism; malonyl-CoA biosynthesis; malonyl-CoA from acetyl-CoA: step 1/1. Component of the acetyl coenzyme A carboxylase (ACC) complex. Biotin carboxylase (BC) catalyzes the carboxylation of biotin on its carrier protein (BCCP) and then the CO(2) group is transferred by the transcarboxylase to acetyl-CoA to form malonyl-CoA. This Xanthomonas campestris pv. campestris (strain 8004) protein is Acetyl-coenzyme A carboxylase carboxyl transferase subunit beta.